Here is a 161-residue protein sequence, read N- to C-terminus: Ribosome maturation factor RimP (161 aa).

This sequence belongs to the RimP family.

It is found in the cytoplasm. In terms of biological role, required for maturation of 30S ribosomal subunits. This is Ribosome maturation factor RimP from Myxococcus xanthus (strain DK1622).